An 87-amino-acid chain; its full sequence is UPF0367 protein SynWH7803_2240 (87 aa).

It belongs to the UPF0367 family.

This Synechococcus sp. (strain WH7803) protein is UPF0367 protein SynWH7803_2240.